Reading from the N-terminus, the 385-residue chain is Tetraacyldisaccharide 4'-kinase (385 aa).

60–67 is a binding site for ATP; the sequence is TVGGSGKT.

It belongs to the LpxK family.

It catalyses the reaction a lipid A disaccharide + ATP = a lipid IVA + ADP + H(+). It participates in glycolipid biosynthesis; lipid IV(A) biosynthesis; lipid IV(A) from (3R)-3-hydroxytetradecanoyl-[acyl-carrier-protein] and UDP-N-acetyl-alpha-D-glucosamine: step 6/6. Functionally, transfers the gamma-phosphate of ATP to the 4'-position of a tetraacyldisaccharide 1-phosphate intermediate (termed DS-1-P) to form tetraacyldisaccharide 1,4'-bis-phosphate (lipid IVA). This Psychrobacter arcticus (strain DSM 17307 / VKM B-2377 / 273-4) protein is Tetraacyldisaccharide 4'-kinase.